The following is a 300-amino-acid chain: F-box/LRR-repeat protein 15 (300 aa).

Methionine 1 carries the N-acetylmethionine modification. One can recognise an F-box domain in the interval 19-66 (LLDLPWEDVLLPHVLNWVPLRQLLRLQRVSRAFRALVQLHLARLRRFD). An interaction with SMURF1 region spans residues 113–269 (NPQLRSVALA…EPSLSRLRKR (157 aa)). LRR repeat units follow at residues 141 to 162 (RLQR…RGLA), 167 to 188 (ALEE…VYLA), 194 to 215 (GLRS…QELA), 220 to 241 (QLEH…RTLA), and 246 to 267 (ALRS…SRLR).

Belongs to the FBXL15 family. In terms of assembly, part of the SCF (SKP1-CUL1-F-box) E3 ubiquitin-protein ligase complex SCF(FBXL15) composed of CUL1, SKP1, RBX1 and FBXL15. Expressed in heart, liver, spleen, bone, muscle, brain and kidney (at protein level).

It localises to the cytoplasm. Its pathway is protein modification; protein ubiquitination. In terms of biological role, substrate recognition component of a SCF (SKP1-CUL1-F-box protein) E3 ubiquitin-protein ligase complex which mediates the ubiquitination and subsequent proteasomal degradation of SMURF1, thereby acting as a positive regulator of the BMP signaling pathway. Required for dorsal/ventral pattern formation and bone mass maintenance. Also mediates ubiquitination of SMURF2 and WWP2. The chain is F-box/LRR-repeat protein 15 (Fbxl15) from Mus musculus (Mouse).